Here is a 552-residue protein sequence, read N- to C-terminus: CTP synthase (552 aa).

The interval 1–265 (MTKFVFVTGG…DRIVCEKLAL (265 aa)) is amidoligase domain. S13 provides a ligand contact to CTP. S13 is a UTP binding site. ATP is bound by residues 14-19 (SLGKGI) and D71. D71 and E139 together coordinate Mg(2+). CTP contacts are provided by residues 146 to 148 (DIE), 186 to 191 (KTKPTQ), and K222. UTP is bound by residues 186 to 191 (KTKPTQ) and K222. The Glutamine amidotransferase type-1 domain occupies 290–545 (TIGMVGKYVD…IKAALAHKQA (256 aa)). An L-glutamine-binding site is contributed by G351. The active-site Nucleophile; for glutamine hydrolysis is C378. Residues 379 to 382 (LGMQ), E402, and R468 each bind L-glutamine. Active-site residues include H518 and E520.

The protein belongs to the CTP synthase family. Homotetramer.

It carries out the reaction UTP + L-glutamine + ATP + H2O = CTP + L-glutamate + ADP + phosphate + 2 H(+). It catalyses the reaction L-glutamine + H2O = L-glutamate + NH4(+). The catalysed reaction is UTP + NH4(+) + ATP = CTP + ADP + phosphate + 2 H(+). It functions in the pathway pyrimidine metabolism; CTP biosynthesis via de novo pathway; CTP from UDP: step 2/2. Allosterically activated by GTP, when glutamine is the substrate; GTP has no effect on the reaction when ammonia is the substrate. The allosteric effector GTP functions by stabilizing the protein conformation that binds the tetrahedral intermediate(s) formed during glutamine hydrolysis. Inhibited by the product CTP, via allosteric rather than competitive inhibition. Its function is as follows. Catalyzes the ATP-dependent amination of UTP to CTP with either L-glutamine or ammonia as the source of nitrogen. Regulates intracellular CTP levels through interactions with the four ribonucleotide triphosphates. This chain is CTP synthase, found in Herminiimonas arsenicoxydans.